Here is a 56-residue protein sequence, read N- to C-terminus: Stable protein 1 (56 aa).

Positions 1–44 (GYTHAFESTFESKSGLQEYLDSAALAAFAEGFLPTLSQRSFNWG) constitute a Stress-response A/B barrel domain.

This Populus euphratica (Euphrates poplar) protein is Stable protein 1.